A 292-amino-acid chain; its full sequence is Aquaporin PIP1-3/PIP1-4 (292 aa).

A disordered region spans residues 1–42 (MEGKEEDVRLGANKFSERQPIGTAAQGAGAGDDDKDYKEPPP). Helical transmembrane passes span 61–81 (IAEFVATFLFLYITVLTVMGV) and 96–118 (IAWSFGGMIFALVYCTAGISGGH). Residues 120 to 122 (NPA) carry the NPA 1 motif. 3 consecutive transmembrane segments (helical) span residues 139–159 (IFYIIMQCLGAICGAGVVKGF), 181–201 (GDGLGAEIVGTFILVYTVFSA), and 215–235 (ILAPLPIGFAVFLVHLATIPI). The NPA 2 motif lies at 241–243 (NPA). A helical transmembrane segment spans residues 263 to 283 (IFWVGPFIGAALAAIYHQVII).

This sequence belongs to the MIP/aquaporin (TC 1.A.8) family. PIP (TC 1.A.8.11) subfamily.

The protein localises to the cell membrane. In terms of biological role, aquaporins facilitate the transport of water and small neutral solutes across cell membranes. The protein is Aquaporin PIP1-3/PIP1-4 (PIP1-3) of Zea mays (Maize).